Consider the following 157-residue polypeptide: Protein NrdI (157 aa).

This sequence belongs to the NrdI family.

Its function is as follows. Probably involved in ribonucleotide reductase function. This is Protein NrdI from Mycoplasma mycoides subsp. mycoides SC (strain CCUG 32753 / NCTC 10114 / PG1).